A 327-amino-acid polypeptide reads, in one-letter code: MNSEHPMTDRVVYRSLMADNLRWDALQLRDGDIIISAPSKSGLTWTQRLVSLLVFDGPDLPGPLSTVSPWLDQTIRPIEEVVATLDAQQHRRFIKTHTPLDGLVLDDRVSYICVGRDPRDAAVSMLYQSANMNEDRMRILHEAVVPFHERIAPPPFAELGHARSPTEEFRDWMEGPNQPPPGIGFTHLKGIGTLANILHQLGTVWVRRHLPNVALFHYADYQADLAGELLRLARVLGIAATRDRARDLAQYATLDAMRSRASEIAPNTTDGIWHSDERFFRRGGSGDWQQFFTEAEHLRYYHRINQLAPPDLLAWAHEGRRGYDPAN.

40 to 45 (KSGLTW) is a binding site for 3'-phosphoadenylyl sulfate. Histidine 97 functions as the Proton acceptor in the catalytic mechanism. 116-124 (RDPRDAAVS) contributes to the 3'-phosphoadenylyl sulfate binding site.

It belongs to the sulfotransferase 1 family.

In terms of biological role, involved in the synthesis of cell wall sulfolipids. The sequence is that of Glycolipid sulfotransferase BCG_1434 from Mycobacterium bovis (strain BCG / Pasteur 1173P2).